Reading from the N-terminus, the 120-residue chain is Large ribosomal subunit protein bL12 (120 aa).

Belongs to the bacterial ribosomal protein bL12 family. As to quaternary structure, homodimer. Part of the ribosomal stalk of the 50S ribosomal subunit. Forms a multimeric L10(L12)X complex, where L10 forms an elongated spine to which 2 to 4 L12 dimers bind in a sequential fashion. Binds GTP-bound translation factors.

Forms part of the ribosomal stalk which helps the ribosome interact with GTP-bound translation factors. Is thus essential for accurate translation. This chain is Large ribosomal subunit protein bL12, found in Lachnoclostridium phytofermentans (strain ATCC 700394 / DSM 18823 / ISDg) (Clostridium phytofermentans).